Here is a 316-residue protein sequence, read N- to C-terminus: 4-hydroxy-3-methylbut-2-enyl diphosphate reductase (316 aa).

Position 12 (cysteine 12) interacts with [4Fe-4S] cluster. The (2E)-4-hydroxy-3-methylbut-2-enyl diphosphate site is built by histidine 41 and histidine 74. Residues histidine 41 and histidine 74 each coordinate dimethylallyl diphosphate. Residues histidine 41 and histidine 74 each coordinate isopentenyl diphosphate. Position 96 (cysteine 96) interacts with [4Fe-4S] cluster. Residue histidine 124 participates in (2E)-4-hydroxy-3-methylbut-2-enyl diphosphate binding. Residue histidine 124 participates in dimethylallyl diphosphate binding. Isopentenyl diphosphate is bound at residue histidine 124. Glutamate 126 acts as the Proton donor in catalysis. Threonine 168 lines the (2E)-4-hydroxy-3-methylbut-2-enyl diphosphate pocket. Cysteine 198 provides a ligand contact to [4Fe-4S] cluster. (2E)-4-hydroxy-3-methylbut-2-enyl diphosphate contacts are provided by serine 226, serine 227, asparagine 228, and serine 270. Residues serine 226, serine 227, asparagine 228, and serine 270 each coordinate dimethylallyl diphosphate. Residues serine 226, serine 227, asparagine 228, and serine 270 each coordinate isopentenyl diphosphate.

It belongs to the IspH family. [4Fe-4S] cluster serves as cofactor.

The enzyme catalyses isopentenyl diphosphate + 2 oxidized [2Fe-2S]-[ferredoxin] + H2O = (2E)-4-hydroxy-3-methylbut-2-enyl diphosphate + 2 reduced [2Fe-2S]-[ferredoxin] + 2 H(+). The catalysed reaction is dimethylallyl diphosphate + 2 oxidized [2Fe-2S]-[ferredoxin] + H2O = (2E)-4-hydroxy-3-methylbut-2-enyl diphosphate + 2 reduced [2Fe-2S]-[ferredoxin] + 2 H(+). The protein operates within isoprenoid biosynthesis; dimethylallyl diphosphate biosynthesis; dimethylallyl diphosphate from (2E)-4-hydroxy-3-methylbutenyl diphosphate: step 1/1. It functions in the pathway isoprenoid biosynthesis; isopentenyl diphosphate biosynthesis via DXP pathway; isopentenyl diphosphate from 1-deoxy-D-xylulose 5-phosphate: step 6/6. Its function is as follows. Catalyzes the conversion of 1-hydroxy-2-methyl-2-(E)-butenyl 4-diphosphate (HMBPP) into a mixture of isopentenyl diphosphate (IPP) and dimethylallyl diphosphate (DMAPP). Acts in the terminal step of the DOXP/MEP pathway for isoprenoid precursor biosynthesis. The protein is 4-hydroxy-3-methylbut-2-enyl diphosphate reductase of Acinetobacter baumannii (strain AB307-0294).